A 275-amino-acid polypeptide reads, in one-letter code: Tryptophan synthase alpha chain (275 aa).

Catalysis depends on proton acceptor residues Glu51 and Asp62.

Belongs to the TrpA family. In terms of assembly, tetramer of two alpha and two beta chains.

It catalyses the reaction (1S,2R)-1-C-(indol-3-yl)glycerol 3-phosphate + L-serine = D-glyceraldehyde 3-phosphate + L-tryptophan + H2O. Its pathway is amino-acid biosynthesis; L-tryptophan biosynthesis; L-tryptophan from chorismate: step 5/5. Functionally, the alpha subunit is responsible for the aldol cleavage of indoleglycerol phosphate to indole and glyceraldehyde 3-phosphate. This chain is Tryptophan synthase alpha chain, found in Methanopyrus kandleri (strain AV19 / DSM 6324 / JCM 9639 / NBRC 100938).